The primary structure comprises 227 residues: ATP-dependent dethiobiotin synthetase BioD (227 aa).

Position 13–18 (13–18) interacts with ATP; sequence DIGKTY. Threonine 17 is a binding site for Mg(2+). The active site involves lysine 38. Position 42 (serine 42) interacts with substrate. ATP contacts are provided by residues aspartate 55, 116 to 119, and 179 to 180; these read EGSG and NN. Residues aspartate 55 and glutamate 116 each coordinate Mg(2+).

This sequence belongs to the dethiobiotin synthetase family. Homodimer. The cofactor is Mg(2+).

The protein localises to the cytoplasm. The catalysed reaction is (7R,8S)-7,8-diammoniononanoate + CO2 + ATP = (4R,5S)-dethiobiotin + ADP + phosphate + 3 H(+). It functions in the pathway cofactor biosynthesis; biotin biosynthesis; biotin from 7,8-diaminononanoate: step 1/2. Its function is as follows. Catalyzes a mechanistically unusual reaction, the ATP-dependent insertion of CO2 between the N7 and N8 nitrogen atoms of 7,8-diaminopelargonic acid (DAPA, also called 7,8-diammoniononanoate) to form a ureido ring. The chain is ATP-dependent dethiobiotin synthetase BioD from Clostridium botulinum (strain Loch Maree / Type A3).